The sequence spans 476 residues: DnaJ homolog subfamily C member 7 homolog (476 aa).

The segment at 1–22 (MTEVETTHMNAGTESQQEPAEL) is disordered. Residues 7–18 (THMNAGTESQQE) show a composition bias toward polar residues. 7 TPR repeats span residues 23 to 56 (AEKQ…GSDS), 59 to 92 (AIYY…KPDV), 143 to 176 (MSWM…NPKN), 177 to 210 (VEAL…DPDC), 223 to 256 (LENT…DPDN), 261 to 294 (AKLY…DSSY), and 295 to 328 (LKGL…DASD). The region spanning 349-414 (DHYKILGVSK…ESRRRFDSGV (66 aa)) is the J domain.

The protein resides in the cytoplasm. The polypeptide is DnaJ homolog subfamily C member 7 homolog (Schizosaccharomyces pombe (strain 972 / ATCC 24843) (Fission yeast)).